Here is a 378-residue protein sequence, read N- to C-terminus: tRNA (guanine(26)-N(2))-dimethyltransferase (378 aa).

The Trm1 methyltransferase domain occupies 4–374 (KEVTEGKVRI…KGYEEIIRCV (371 aa)). Residues Arg44, Arg69, Asp87, Asp114, and Ala115 each contribute to the S-adenosyl-L-methionine site. Zn(2+) contacts are provided by Cys246, Cys249, Cys263, and Cys266.

It belongs to the class I-like SAM-binding methyltransferase superfamily. Trm1 family.

The catalysed reaction is guanosine(26) in tRNA + 2 S-adenosyl-L-methionine = N(2)-dimethylguanosine(26) in tRNA + 2 S-adenosyl-L-homocysteine + 2 H(+). In terms of biological role, dimethylates a single guanine residue at position 26 of a number of tRNAs using S-adenosyl-L-methionine as donor of the methyl groups. The sequence is that of tRNA (guanine(26)-N(2))-dimethyltransferase from Saccharolobus islandicus (strain Y.G.57.14 / Yellowstone #1) (Sulfolobus islandicus).